The sequence spans 719 residues: Penicillin-binding protein 1A (719 aa).

Residues 62–223 (LIADLGSERR…NQYDPYSHPE (162 aa)) form a transglycosylase region. Glu91 functions as the Proton donor; for transglycosylase activity in the catalytic mechanism. The segment at 297-611 (DVYTNVDQEA…RLTPLVGNGL (315 aa)) is transpeptidase. Ser370 serves as the catalytic Acyl-ester intermediate; for transpeptidase activity. Residues 652–719 (ARSTWSSPAP…QNQNPQPAQP (68 aa)) form a disordered region. Residues 654-719 (STWSSPAPQQ…QNQNPQPAQP (66 aa)) show a composition bias toward low complexity.

The protein in the N-terminal section; belongs to the glycosyltransferase 51 family. In the C-terminal section; belongs to the transpeptidase family. Interacts with MreC in the elongasome.

The protein localises to the secreted. It catalyses the reaction [GlcNAc-(1-&gt;4)-Mur2Ac(oyl-L-Ala-gamma-D-Glu-L-Lys-D-Ala-D-Ala)](n)-di-trans,octa-cis-undecaprenyl diphosphate + beta-D-GlcNAc-(1-&gt;4)-Mur2Ac(oyl-L-Ala-gamma-D-Glu-L-Lys-D-Ala-D-Ala)-di-trans,octa-cis-undecaprenyl diphosphate = [GlcNAc-(1-&gt;4)-Mur2Ac(oyl-L-Ala-gamma-D-Glu-L-Lys-D-Ala-D-Ala)](n+1)-di-trans,octa-cis-undecaprenyl diphosphate + di-trans,octa-cis-undecaprenyl diphosphate + H(+). The enzyme catalyses Preferential cleavage: (Ac)2-L-Lys-D-Ala-|-D-Ala. Also transpeptidation of peptidyl-alanyl moieties that are N-acyl substituents of D-alanine.. Its pathway is cell wall biogenesis; peptidoglycan biosynthesis. Functionally, cell wall formation. The sequence is that of Penicillin-binding protein 1A (pbpA) from Streptococcus pneumoniae (strain ATCC BAA-255 / R6).